A 76-amino-acid polypeptide reads, in one-letter code: uncharacterized protein (76 aa).

2 helical membrane passes run 9–29 and 45–65; these read AIGI…LQAV and LLMI…FLDY.

It is found in the cell membrane. This is an uncharacterized protein from Bacillus subtilis (strain 168).